Reading from the N-terminus, the 129-residue chain is Phenazine antibiotic resistance protein EhpR (129 aa).

Positions 10 to 128 (TPNLQLVYVS…DGHIIRVCPL (119 aa)) constitute a VOC domain. D-alanylgriseoluteate-binding positions include 42-43 (RY) and Trp57.

As to quaternary structure, homodimer.

Functionally, required for resistance to the phenazine antibiotic D-alanylgriseoluteic acid (AGA), an antibiotic produced by E.agglomerans itself, and thus protects the bacterium against phenazine toxicity. Probably binds AGA and acts as a chaperone that works in tandem with a membrane transporter for subsequent antibiotic secretion. The sequence is that of Phenazine antibiotic resistance protein EhpR from Enterobacter agglomerans (Erwinia herbicola).